The following is a 408-amino-acid chain: Aminoacylase-1 (408 aa).

Residue histidine 76 coordinates Zn(2+). Aspartate 78 is an active-site residue. Aspartate 109 is a binding site for Zn(2+). The active-site Proton acceptor is the glutamate 143. Zn(2+)-binding residues include glutamate 144, glutamate 172, and histidine 379.

It belongs to the peptidase M20A family. In terms of assembly, homodimer. It depends on Zn(2+) as a cofactor.

Its subcellular location is the cytoplasm. It catalyses the reaction an N-acyl-L-amino acid + H2O = an L-alpha-amino acid + a carboxylate. The enzyme catalyses an N-acetyl-L-cysteine-S-conjugate + H2O = an S-substituted L-cysteine + acetate. Its function is as follows. Involved in the hydrolysis of N-acylated or N-acetylated amino acids (except L-aspartate). The chain is Aminoacylase-1 (acy1) from Dictyostelium discoideum (Social amoeba).